The following is a 513-amino-acid chain: QWRF motif-containing protein 9 (513 aa).

Polar residues-rich tracts occupy residues 1–26 (MTAA…PSES), 43–55 (GTSS…SPKR), and 65–78 (VTPS…PQST). Disordered stretches follow at residues 1–89 (MTAA…RREV), 115–144 (GTLE…LSDQ), and 184–293 (VSNR…LRVR). The span at 79 to 89 (PRRESLDRREV) shows a compositional bias: basic and acidic residues. 2 stretches are compositionally biased toward polar residues: residues 202–211 (ESVSSGSSNG) and 244–262 (VDSS…SPRG). Positions 334-337 (QWQF) match the QWRF motif motif.

Belongs to the QWRF family.

The sequence is that of QWRF motif-containing protein 9 (QWRF9) from Arabidopsis thaliana (Mouse-ear cress).